Reading from the N-terminus, the 95-residue chain is Co-chaperonin GroES (95 aa).

It belongs to the GroES chaperonin family. Heptamer of 7 subunits arranged in a ring. Interacts with the chaperonin GroEL.

The protein resides in the cytoplasm. Together with the chaperonin GroEL, plays an essential role in assisting protein folding. The GroEL-GroES system forms a nano-cage that allows encapsulation of the non-native substrate proteins and provides a physical environment optimized to promote and accelerate protein folding. GroES binds to the apical surface of the GroEL ring, thereby capping the opening of the GroEL channel. This chain is Co-chaperonin GroES, found in Francisella tularensis subsp. holarctica (strain FTNF002-00 / FTA).